Reading from the N-terminus, the 303-residue chain is tRNA dimethylallyltransferase (303 aa).

Residue 10-17 (GPTASGKS) coordinates ATP. 12–17 (TASGKS) serves as a coordination point for substrate. Positions 35 to 38 (DSMQ) are interaction with substrate tRNA.

It belongs to the IPP transferase family. As to quaternary structure, monomer. Mg(2+) is required as a cofactor.

It carries out the reaction adenosine(37) in tRNA + dimethylallyl diphosphate = N(6)-dimethylallyladenosine(37) in tRNA + diphosphate. Catalyzes the transfer of a dimethylallyl group onto the adenine at position 37 in tRNAs that read codons beginning with uridine, leading to the formation of N6-(dimethylallyl)adenosine (i(6)A). The sequence is that of tRNA dimethylallyltransferase from Methylobacterium nodulans (strain LMG 21967 / CNCM I-2342 / ORS 2060).